A 293-amino-acid polypeptide reads, in one-letter code: Oxidoreductase clz16 (293 aa).

The protein belongs to the asaB hydroxylase/desaturase family.

It functions in the pathway secondary metabolite biosynthesis. Its function is as follows. Oxidoreductase; part of the gene cluster that mediates the biosynthesis of squalestatin S1 (SQS1, also known as zaragozic acid A), a heavily oxidized fungal polyketide that offers potent cholesterol lowering activity by targeting squalene synthase (SS). SQS1 is composed of a 2,8-dioxobicyclic[3.2.1]octane-3,4,5-tricarboxyclic acid core that is connected to two lipophilic polyketide arms. These initial steps feature the priming of an unusual benzoic acid starter unit onto the highly reducing polyketide synthase clz14, followed by oxaloacetate extension and product release to generate a tricarboxylic acid containing product. The phenylalanine ammonia lyase (PAL) clz10 and the acyl-CoA ligase clz12 are involved in transforming phenylalanine into benzoyl-CoA. The citrate synthase-like protein clz17 is involved in connecting the C-alpha-carbons of the hexaketide chain and oxaloacetate to afford the tricarboxylic acid unit. The potential hydrolytic enzymes, clz11 and clz13, are in close proximity to pks2 and may participate in product release. On the other side, the tetraketide arm is synthesized by a the squalestatin tetraketide synthase clz2 and enzymatically esterified to the core in the last biosynthetic step, by the acetyltransferase clz6. The biosynthesis of the tetraketide must involve 3 rounds of chain extension. After the first and second rounds methyl-transfer occurs, and in all rounds of extension the ketoreductase and dehydratase are active. The enoyl reductase and C-MeT of clz2 are not active in the final round of extension. The acetyltransferase clz6 appears to have a broad substrate selectivity for its acyl CoA substrate, allowing the in vitro synthesis of novel squalestatins. The biosynthesis of SQS1 requires several oxidative steps likely performed by oxidoreductases clz3, clz15 and clz16. Finally, in support of the identification of the cluster as being responsible for SQS1 production, the cluster contains a gene encoding a putative squalene synthase (SS) clz20, suggesting a likely mechanism for self-resistance. This is Oxidoreductase clz16 from Cochliobolus lunatus (Filamentous fungus).